The sequence spans 475 residues: Ankyrin repeat, SAM and basic leucine zipper domain-containing protein 1 (475 aa).

A disordered region spans residues 1–24 (MAAGPLRGLAVAGGGESSESEDDG). Phosphoserine is present on residues serine 17, serine 18, and serine 20. 6 ANK repeats span residues 45–74 (ERQE…SVDT), 78–107 (YGWT…NASF), 110–144 (DKQT…DPNV), 148–177 (RLMT…EVNT), 181–210 (NGYT…NKMI), and 214–243 (DGKT…PLEG). One can recognise an SAM domain in the interval 272–334 (SYTAFGDLEI…KIMAALKELE (63 aa)).

In terms of assembly, interacts with DDX4, PIWIL1, RANBP9 and TDRD1.

It localises to the cytoplasm. Its function is as follows. Plays a central role during spermatogenesis by repressing transposable elements and preventing their mobilization, which is essential for the germline integrity. Acts via the piRNA metabolic process, which mediates the repression of transposable elements during meiosis by forming complexes composed of piRNAs and Piwi proteins and governs the methylation and subsequent repression of transposons. Its association with pi-bodies suggests a participation in the primary piRNAs metabolic process. Required prior to the pachytene stage to facilitate the production of multiple types of piRNAs, including those associated with repeats involved in the regulation of retrotransposons. May act by mediating protein-protein interactions during germ cell maturation. This Ovis aries (Sheep) protein is Ankyrin repeat, SAM and basic leucine zipper domain-containing protein 1 (ASZ1).